Here is a 342-residue protein sequence, read N- to C-terminus: uncharacterized protein (342 aa).

This sequence belongs to the cycloisomerase 2 family.

This is an uncharacterized protein from Staphylococcus aureus (strain N315).